A 348-amino-acid chain; its full sequence is N-formyl peptide receptor 2 (348 aa).

Asparagine 1 carries N-linked (GlcNAc...) asparagine glycosylation. Topologically, residues 1–24 (NFSTPLSEYEEVSYESAGYTVLQI) are extracellular. The chain crosses the membrane as a helical span at residues 25 to 47 (LPLVVLGVTFVLGVLGNGLVIWV). The Cytoplasmic portion of the chain corresponds to 48–58 (AGFRMTRTVTT). A helical membrane pass occupies residues 59–80 (ICYLNLALADFSFTATLPFLIV). At 81-97 (SMAMGEKWPFGWFLCKL) the chain is on the extracellular side. Cysteines 95 and 173 form a disulfide. A helical membrane pass occupies residues 98–118 (IHIVVDINLFGSVFLIGFIAL). Topologically, residues 119-137 (DRCICVLHPVWAQNHRTVS) are cytoplasmic. The chain crosses the membrane as a helical span at residues 138-159 (LAMKVIVGPWILALVLTLPVFL). At 160–202 (FLTTVTIPNGDTYCTFNFASWGGTPEKRLKVAITMLTARGIIR) the chain is on the extracellular side. Residues 203-223 (FVIGFSMPMSIVATCYGLIAA) traverse the membrane as a helical segment. Over 224-239 (KIHKKGMIKSSRPLRV) the chain is Cytoplasmic. Residues 240-263 (LTAVVASFFICWFPFQLVALLSTV) traverse the membrane as a helical segment. The Extracellular segment spans residues 264–283 (WLKEILVDGKYKIINILVNP). Residues 284-303 (TSSLAFFNSCLNPMLYVFVG) form a helical membrane-spanning segment. The Cytoplasmic portion of the chain corresponds to 304 to 348 (QDFRERLIHSLPTSLERALSEDSAPTNDTAASCASPPAETELQAM). The segment at 322–348 (LSEDSAPTNDTAASCASPPAETELQAM) is disordered. The span at 326 to 335 (SAPTNDTAAS) shows a compositional bias: polar residues.

This sequence belongs to the G-protein coupled receptor 1 family. As to quaternary structure, interacts with APP; the interaction takes place at the cell surface and the complex is then rapidly internalized.

The protein localises to the cell membrane. Low affinity receptor for N-formyl-methionyl peptides, which are powerful neutrophil chemotactic factors. Binding of FMLP to the receptor causes activation of neutrophils. This response is mediated via a G-protein that activates a phosphatidylinositol-calcium second messenger system. Receptor for the chemokine-like protein FAM19A5, mediating FAM19A5-stimulated macrophage chemotaxis and the inhibitory effect on TNFSF11/RANKL-induced osteoclast differentiation. The protein is N-formyl peptide receptor 2 (FPR2) of Macaca mulatta (Rhesus macaque).